The following is a 161-amino-acid chain: Large ribosomal subunit protein uL15 (161 aa).

The segment at 1-50 (MKLSDIADNAGSRKKRMRIGRGIGSGKGKTGGRGGKGQTARSGVRINGFE) is disordered. Positions 21–37 (RGIGSGKGKTGGRGGKG) are enriched in gly residues.

The protein belongs to the universal ribosomal protein uL15 family. In terms of assembly, part of the 50S ribosomal subunit.

Functionally, binds to the 23S rRNA. This is Large ribosomal subunit protein uL15 from Nitrobacter winogradskyi (strain ATCC 25391 / DSM 10237 / CIP 104748 / NCIMB 11846 / Nb-255).